Here is a 304-residue protein sequence, read N- to C-terminus: Putative S-adenosyl-L-methionine-dependent methyltransferase YktD (304 aa).

S-adenosyl-L-methionine is bound by residues Asp134 and 163-164; that span reads DF.

It belongs to the UPF0677 family.

May be involved in polyketide synthesis. The chain is Putative S-adenosyl-L-methionine-dependent methyltransferase YktD (yktD) from Bacillus subtilis (strain 168).